The following is a 1069-amino-acid chain: Regulator of nonsense transcripts 1 (1069 aa).

The interval 1–86 (MDDSDDEYSR…SEKSLTEEQH (86 aa)) is disordered. Residues 28 to 50 (IGNTQDSQFAYEQFSVPTQSSQA) show a composition bias toward polar residues. Residues 51-65 (TDLLPGGTDGTTNDL) show a composition bias toward low complexity. Residues 77–86 (SEKSLTEEQH) are compositionally biased toward basic and acidic residues. One can recognise a Upf1 CH-rich domain in the interval 87 to 244 (EQKLPEHACR…VRMEELWRDH (158 aa)). Zn(2+) is bound by residues Cys-95, Cys-98, Cys-109, Cys-112, Cys-117, His-127, His-131, His-137, Cys-155, Cys-158, Cys-181, and Cys-185. The segment at 95 to 127 (CRYCGISDPLCVAKCTVCRKWFCNSNDGTSGGH) is C3H. The tract at residues 109-137 (CTVCRKWFCNSNDGTSGGHIVHHMVRSQH) is CC/SHH/C. The interval 155 to 185 (CYRCGSKNVFNLGFIPGKKDQVVVIICRTPC) is C4. ATP-binding positions include Gln-450, 467–474 (GPPGTGKT), Gln-639, Tyr-676, and Glu-807. A disordered region spans residues 966–1069 (ARNQKDRRRG…MDDLLFSQDC (104 aa)). Over residues 991–1013 (SQGMMSQQSQQYPPQGASSQSQY) the composition is skewed to low complexity.

This sequence belongs to the DNA2/NAM7 helicase family. Post-translationally, phosphorylated probably by smg-1. Smg-3 and smg-4 are required for phosphorylation.

The protein resides in the cytoplasm. It catalyses the reaction ATP + H2O = ADP + phosphate + H(+). Its function is as follows. RNA-dependent helicase required for nonsense-mediated decay (NMD) of aberrant mRNAs containing premature stop codons and modulates the expression level of normal mRNAs. Is recruited to mRNAs upon translation termination and undergoes a cycle of phosphorylation and dephosphorylation; its phosphorylation appears to be a key step in NMD. The formation of an smg-2-3-4 surveillance complex is believed to activate NMD. This is Regulator of nonsense transcripts 1 (smg-2) from Caenorhabditis elegans.